Here is a 321-residue protein sequence, read N- to C-terminus: tRNA uridine(34) hydroxylase (321 aa).

The region spanning 135–233 (DDPLTLVIDT…YLEEVPENES (99 aa)) is the Rhodanese domain. Residue Cys-193 is the Cysteine persulfide intermediate of the active site.

This sequence belongs to the TrhO family.

It carries out the reaction uridine(34) in tRNA + AH2 + O2 = 5-hydroxyuridine(34) in tRNA + A + H2O. Catalyzes oxygen-dependent 5-hydroxyuridine (ho5U) modification at position 34 in tRNAs. The sequence is that of tRNA uridine(34) hydroxylase from Prochlorococcus marinus (strain SARG / CCMP1375 / SS120).